Here is a 20-residue protein sequence, read N- to C-terminus: Alkaline phosphatase (20 aa).

As to expression, expressed by the venom gland.

Its subcellular location is the secreted. It catalyses the reaction a phosphate monoester + H2O = an alcohol + phosphate. Has hemorrhagic activity. This chain is Alkaline phosphatase, found in Deinagkistrodon acutus (Hundred-pace snake).